The following is a 286-amino-acid chain: 4-diphosphocytidyl-2-C-methyl-D-erythritol kinase (286 aa).

Residue lysine 11 is part of the active site. ATP is bound at residue 94–104 (PMGGGIGGGSS). Aspartate 136 is an active-site residue.

This sequence belongs to the GHMP kinase family. IspE subfamily.

The enzyme catalyses 4-CDP-2-C-methyl-D-erythritol + ATP = 4-CDP-2-C-methyl-D-erythritol 2-phosphate + ADP + H(+). It functions in the pathway isoprenoid biosynthesis; isopentenyl diphosphate biosynthesis via DXP pathway; isopentenyl diphosphate from 1-deoxy-D-xylulose 5-phosphate: step 3/6. Catalyzes the phosphorylation of the position 2 hydroxy group of 4-diphosphocytidyl-2C-methyl-D-erythritol. This Pseudomonas putida (strain GB-1) protein is 4-diphosphocytidyl-2-C-methyl-D-erythritol kinase.